An 83-amino-acid polypeptide reads, in one-letter code: Translational regulator CsrA (83 aa).

It belongs to the CsrA/RsmA family. In terms of assembly, homodimer; the beta-strands of each monomer intercalate to form a hydrophobic core, while the alpha-helices form wings that extend away from the core.

The protein resides in the cytoplasm. A translational regulator that binds mRNA to regulate translation initiation and/or mRNA stability. Usually binds in the 5'-UTR at or near the Shine-Dalgarno sequence preventing ribosome-binding, thus repressing translation. Its main target seems to be the major flagellin gene, while its function is anatagonized by FliW. In Thermotoga maritima (strain ATCC 43589 / DSM 3109 / JCM 10099 / NBRC 100826 / MSB8), this protein is Translational regulator CsrA.